The chain runs to 694 residues: Elongation factor G (694 aa).

The region spanning 6-288 (KLYRNIGIAA…GVIEYLPSPT (283 aa)) is the tr-type G domain. Residues 15–22 (AHVDAGKT), 86–90 (DTPGH), and 140–143 (NKMD) each bind GTP.

The protein belongs to the TRAFAC class translation factor GTPase superfamily. Classic translation factor GTPase family. EF-G/EF-2 subfamily.

The protein resides in the cytoplasm. Functionally, catalyzes the GTP-dependent ribosomal translocation step during translation elongation. During this step, the ribosome changes from the pre-translocational (PRE) to the post-translocational (POST) state as the newly formed A-site-bound peptidyl-tRNA and P-site-bound deacylated tRNA move to the P and E sites, respectively. Catalyzes the coordinated movement of the two tRNA molecules, the mRNA and conformational changes in the ribosome. The sequence is that of Elongation factor G from Legionella pneumophila subsp. pneumophila (strain Philadelphia 1 / ATCC 33152 / DSM 7513).